Here is a 288-residue protein sequence, read N- to C-terminus: Diaminopimelate epimerase (288 aa).

3 residues coordinate substrate: asparagine 17, glutamine 47, and asparagine 67. Catalysis depends on cysteine 76, which acts as the Proton donor. Substrate-binding positions include 77–78 (GN), asparagine 164, asparagine 197, and 215–216 (ER). Cysteine 224 serves as the catalytic Proton acceptor. Substrate is bound at residue 225-226 (GS).

It belongs to the diaminopimelate epimerase family. Homodimer.

It is found in the cytoplasm. It catalyses the reaction (2S,6S)-2,6-diaminopimelate = meso-2,6-diaminopimelate. It participates in amino-acid biosynthesis; L-lysine biosynthesis via DAP pathway; DL-2,6-diaminopimelate from LL-2,6-diaminopimelate: step 1/1. Functionally, catalyzes the stereoinversion of LL-2,6-diaminopimelate (L,L-DAP) to meso-diaminopimelate (meso-DAP), a precursor of L-lysine and an essential component of the bacterial peptidoglycan. In Rhodopseudomonas palustris (strain BisA53), this protein is Diaminopimelate epimerase.